A 535-amino-acid polypeptide reads, in one-letter code: uncharacterized protein (535 aa).

A helical transmembrane segment spans residues Ile-17 to Leu-37. N-linked (GlcNAc...) asparagine glycans are attached at residues Asn-44 and Asn-61. Transmembrane regions (helical) follow at residues Leu-107–Ile-127, Ile-144–Leu-164, Ile-167–Trp-187, Ile-199–Cys-219, Trp-225–Phe-245, and Ala-292–Ile-312. An N-linked (GlcNAc...) asparagine glycan is attached at Asn-329. The next 5 helical transmembrane spans lie at Thr-331–Ile-351, Val-368–Val-388, Thr-395–Tyr-415, Met-429–Phe-451, and Ile-463–Ser-483.

This sequence belongs to the major facilitator superfamily. Sodium/anion cotransporter family.

It localises to the membrane. This is an uncharacterized protein from Caenorhabditis elegans.